The chain runs to 291 residues: Ubiquinone biosynthesis protein COQ4, mitochondrial (291 aa).

A mitochondrion-targeting transit peptide spans 1-37; the sequence is MLGRRSVSLLRGLTELPVSSRAHTALRALSVPQTRRN. The Zn(2+) site is built by H169, D170, H173, and E185. A compositionally biased stretch (basic and acidic residues) spans 271 to 283; it reads PLNEAKEAAERRS. Residues 271 to 291 form a disordered region; it reads PLNEAKEAAERRSKTTQNQIY.

This sequence belongs to the COQ4 family. In terms of assembly, component of a multi-subunit COQ enzyme complex, composed of at least COQ3, COQ4, COQ5, COQ6, COQ7 and COQ9. Requires Zn(2+) as cofactor.

The protein localises to the mitochondrion inner membrane. The catalysed reaction is a 4-hydroxy-3-methoxy-5-(all-trans-polyprenyl)benzoate + H(+) = a 2-methoxy-6-(all-trans-polyprenyl)phenol + CO2. It participates in cofactor biosynthesis; ubiquinone biosynthesis. In terms of biological role, lyase that catalyzes the C1-decarboxylation of 4-hydroxy-3-methoxy-5-(all-trans-polyprenyl)benzoic acid into 2-methoxy-6-(all-trans-polyprenyl)phenol during ubiquinone biosynthesis. This chain is Ubiquinone biosynthesis protein COQ4, mitochondrial, found in Coprinopsis cinerea (strain Okayama-7 / 130 / ATCC MYA-4618 / FGSC 9003) (Inky cap fungus).